The chain runs to 178 residues: Oligoribonuclease (178 aa).

Residues L7–L168 form the Exonuclease domain. The active site involves Y128.

The protein belongs to the oligoribonuclease family.

Its subcellular location is the cytoplasm. Functionally, 3'-to-5' exoribonuclease specific for small oligoribonucleotides. This Francisella tularensis subsp. holarctica (strain OSU18) protein is Oligoribonuclease.